A 487-amino-acid chain; its full sequence is 3-octaprenyl-4-hydroxybenzoate carboxy-lyase (487 aa).

Asn-172 contacts Mn(2+). Prenylated FMN contacts are provided by residues 175–177 (IYR), 189–191 (RWL), and 194–195 (RG). Glu-238 serves as a coordination point for Mn(2+). The active-site Proton donor is Asp-287.

Belongs to the UbiD family. In terms of assembly, homohexamer. The cofactor is prenylated FMN. Mn(2+) is required as a cofactor.

It is found in the cell membrane. It catalyses the reaction a 4-hydroxy-3-(all-trans-polyprenyl)benzoate + H(+) = a 2-(all-trans-polyprenyl)phenol + CO2. Its pathway is cofactor biosynthesis; ubiquinone biosynthesis. In terms of biological role, catalyzes the decarboxylation of 3-octaprenyl-4-hydroxy benzoate to 2-octaprenylphenol, an intermediate step in ubiquinone biosynthesis. The sequence is that of 3-octaprenyl-4-hydroxybenzoate carboxy-lyase from Dechloromonas aromatica (strain RCB).